A 300-amino-acid polypeptide reads, in one-letter code: GTPase Era (300 aa).

An Era-type G domain is found at 5–176; sequence RSGFVCLIGR…IDVLAAALPP (172 aa). Positions 13–20 are G1; sequence GRPNTGKS. Position 13 to 20 (13 to 20) interacts with GTP; the sequence is GRPNTGKS. The segment at 39–43 is G2; sequence QTTRH. The interval 61–64 is G3; it reads DTPG. Residues 61 to 65 and 125 to 128 contribute to the GTP site; these read DTPGL and TKID. The tract at residues 125–128 is G4; that stretch reads TKID. The G5 stretch occupies residues 155–157; it reads VSA. In terms of domain architecture, KH type-2 spans 207 to 286; sequence VHDELPHSLA…YLDLHVNVAK (80 aa).

Belongs to the TRAFAC class TrmE-Era-EngA-EngB-Septin-like GTPase superfamily. Era GTPase family. In terms of assembly, monomer.

It is found in the cell envelope. Its subcellular location is the secreted. The protein localises to the cell wall. Functionally, exhibits GTPase activity. Binds RNA but is probably not involved in ribosome assembly in mycobacteria. In Mycobacterium leprae (strain TN), this protein is GTPase Era.